Consider the following 142-residue polypeptide: Transcriptional regulator MraZ (142 aa).

2 consecutive SpoVT-AbrB domains span residues 5 to 47 (THTP…PTPE) and 76 to 119 (AHDE…DRVA).

The protein belongs to the MraZ family. Forms oligomers.

Its subcellular location is the cytoplasm. It localises to the nucleoid. The polypeptide is Transcriptional regulator MraZ (Salinispora tropica (strain ATCC BAA-916 / DSM 44818 / JCM 13857 / NBRC 105044 / CNB-440)).